The primary structure comprises 128 residues: Large ribosomal subunit protein bL19 (128 aa).

The protein belongs to the bacterial ribosomal protein bL19 family.

This protein is located at the 30S-50S ribosomal subunit interface and may play a role in the structure and function of the aminoacyl-tRNA binding site. The sequence is that of Large ribosomal subunit protein bL19 from Paracidovorax citrulli (strain AAC00-1) (Acidovorax citrulli).